The chain runs to 564 residues: Cytochrome c oxidase subunit 1 (564 aa).

Positions 1 to 23 are disordered; the sequence is MTAVAPRLENYAEPTRPAPTGGA. 7 helical membrane passes run 43–63, 83–103, 122–142, 171–191, 214–234, 259–279, and 292–312; these read MMYIVMSFVWFFVGGLMALLI, LFTLHGTIMLLAFGTPVVWGF, LNAFGFWITQIGVVAMLAGFL, FWIIGVGATGVGTIASAVNMI, IFVASVIVLLIFPLLTAAALG, LFWFFGHPEVYVLALPFFGIV, and FGYIGLVFATLSIGMLSMAVW. Residue His-87 participates in Fe(II)-heme a binding. Cu cation contacts are provided by His-265 and Tyr-269. Positions 265–269 form a cross-link, 1'-histidyl-3'-tyrosine (His-Tyr); sequence HPEVY. Cu cation contacts are provided by His-314 and His-315. A run of 2 helical transmembrane segments spans residues 316–336 and 360–380; these read MFVTGAILLPFFSFMTFLISV and MTWTMGFLVTFLFGGLTGIML. His-398 is a heme a3 binding site. A run of 3 helical transmembrane segments spans residues 399 to 419, 434 to 454, and 477 to 497; these read FHYTLFGTVVFASYAGVYFWF, IHFWITFVGFHGTFLVQHWVG, and ISTVFSFLLGVSVIPFIWNVF. His-400 is a binding site for Fe(II)-heme a.

The protein belongs to the heme-copper respiratory oxidase family. As to quaternary structure, associates with subunits II, III and IV to form cytochrome c oxidase. Cu(2+) serves as cofactor. Requires heme as cofactor.

It localises to the cell membrane. The enzyme catalyses 4 Fe(II)-[cytochrome c] + O2 + 8 H(+)(in) = 4 Fe(III)-[cytochrome c] + 2 H2O + 4 H(+)(out). Its pathway is energy metabolism; oxidative phosphorylation. In terms of biological role, cytochrome c oxidase is the component of the respiratory chain that catalyzes the reduction of oxygen to water. Subunits 1-3 form the functional core of the enzyme complex. CO I is the catalytic subunit of the enzyme. Electrons originating in cytochrome c are transferred via the copper A center of subunit 2 and heme A of subunit 1 to the bimetallic center formed by heme A3 and copper B. The polypeptide is Cytochrome c oxidase subunit 1 (ctaD) (Corynebacterium diphtheriae (strain ATCC 700971 / NCTC 13129 / Biotype gravis)).